We begin with the raw amino-acid sequence, 260 residues long: tRNA pseudouridine synthase C (260 aa).

The active site involves Asp54.

It belongs to the pseudouridine synthase RluA family.

The catalysed reaction is uridine(65) in tRNA = pseudouridine(65) in tRNA. Responsible for synthesis of pseudouridine from uracil-65 in transfer RNAs. The polypeptide is tRNA pseudouridine synthase C (truC) (Escherichia coli (strain K12)).